The primary structure comprises 936 residues: General transcription factor II-I repeat domain-containing protein 2 (936 aa).

Residues 95 to 189 (EACPGEAQLL…FLGAESQLGG (95 aa)) form a GTF2I-like 1 repeat. The disordered stretch occupies residues 199–222 (PTVPPNDSYGPVSVKTEPMEDSGT). The GTF2I-like 2 repeat unit spans residues 319–413 (LSGLEKIKQL…LPGLELSNVG (95 aa)).

This sequence belongs to the TFII-I family. As to expression, ubiquitous.

Its subcellular location is the nucleus. The polypeptide is General transcription factor II-I repeat domain-containing protein 2 (Gtf2ird2) (Mus musculus (Mouse)).